The primary structure comprises 188 residues: Pallidipin (188 aa).

Residues 1–18 (MKVIIAATLLGILMHAFA) form the signal peptide. Intrachain disulfides connect Cys21-Cys137, Cys55-Cys184, and Cys89-Cys105.

This sequence belongs to the calycin superfamily. Triabin family. Expressed in salivary glands.

It localises to the secreted. Functionally, has been described as a specific inhibitor of collagen-induced platelet aggregation. However, as it does not affect platelet shape change or adhesion, it is plausible that it exerts its antiplatelet activity by a mechanism similar to that of triplatin, moubatin and dipetalodipin as scavenging eicosanoids involved in inflammation such as thromboxane A2 (TXA2). In Meccus pallidipennis (Triatomine bug), this protein is Pallidipin.